The following is a 67-amino-acid chain: DNA-directed RNA polymerase subunit omega (67 aa).

The protein belongs to the RNA polymerase subunit omega family. In terms of assembly, the RNAP catalytic core consists of 2 alpha, 1 beta, 1 beta' and 1 omega subunit. When a sigma factor is associated with the core the holoenzyme is formed, which can initiate transcription.

The enzyme catalyses RNA(n) + a ribonucleoside 5'-triphosphate = RNA(n+1) + diphosphate. In terms of biological role, promotes RNA polymerase assembly. Latches the N- and C-terminal regions of the beta' subunit thereby facilitating its interaction with the beta and alpha subunits. This Paraburkholderia phymatum (strain DSM 17167 / CIP 108236 / LMG 21445 / STM815) (Burkholderia phymatum) protein is DNA-directed RNA polymerase subunit omega.